A 446-amino-acid polypeptide reads, in one-letter code: SWI/SNF chromatin-remodeling accessory subunit 1 (446 aa).

The tract at residues 1-53 is disordered; that stretch reads MQTQARPPVPQGPRFNHPATPQQVRRPINAPLPGQTAQIQGNRGPQPPKKKKR. Residues 220–297 enclose the SWIB/MDM2 domain; it reads YQPMKFKLHP…PQRLHQLLQQ (78 aa).

This sequence belongs to the SMARCD family. In terms of assembly, component of the multiprotein chromatin-remodeling complexes SWI/SNF: SWI/SNF-A (BAF), SWI/SNF-B (PBAF) and related complexes. The canonical complex contains a catalytic subunit swsn-4, core subunits swsn-1 and swsn-5, and accessory subunits swsn-3, swsn-6, phf-10, dpff-1, swsn-9 and either ham-3/swsn-2.1 or swsn-2.2. May interact with blmp-1. As to expression, broadly expressed in all cell types.

Its subcellular location is the nucleus. In terms of biological role, involved in transcriptional activation and repression of select genes by chromatin remodeling (alteration of DNA-nucleosome topology). Component of SWI/SNF chromatin remodeling complexes that carry out key enzymatic activities, changing chromatin structure by altering DNA-histone contacts within a nucleosome in an ATP-dependent manner. Required for the blmp-1-mediated transcriptional activation or repression of several hypodermal genes such as bed-3. Involved in regulating differentiation, migration and axon pathfinding of specific serotonergic neurons (HSNs). Probably regulates vulva development through the let-60/Ras pathway. May be involved in regulation of developmental processes in the embryo driven by the Wnt pathway. Involved in gonadogenesis. The sequence is that of SWI/SNF chromatin-remodeling accessory subunit 1 from Caenorhabditis elegans.